We begin with the raw amino-acid sequence, 239 residues long: Lipoprotein-releasing system ATP-binding protein LolD (239 aa).

Residues 10–239 (VELSGVRKDY…ADGPHRRSGA (230 aa)) enclose the ABC transporter domain. 46–53 (GPSGSGKS) provides a ligand contact to ATP.

This sequence belongs to the ABC transporter superfamily. Lipoprotein translocase (TC 3.A.1.125) family. The complex is composed of two ATP-binding proteins (LolD) and two transmembrane proteins (LolC and LolE).

Its subcellular location is the cell inner membrane. Functionally, part of the ABC transporter complex LolCDE involved in the translocation of mature outer membrane-directed lipoproteins, from the inner membrane to the periplasmic chaperone, LolA. Responsible for the formation of the LolA-lipoprotein complex in an ATP-dependent manner. The polypeptide is Lipoprotein-releasing system ATP-binding protein LolD (Anaeromyxobacter dehalogenans (strain 2CP-C)).